Consider the following 601-residue polypeptide: Urocanate hydratase (601 aa).

Residues 63–64 (GG) and Gln-141 each bind NAD(+). Residues 172–201 (SDRPSALLKQGLSPEGTAPGSGRSSAQVPG) form an insert region. The segment at 179-200 (LKQGLSPEGTAPGSGRSSAQVP) is disordered. Residues 216-218 (GMG), Glu-236, 282-283 (NA), 307-311 (QTSAH), 317-318 (YL), and Tyr-368 contribute to the NAD(+) site. Cys-456 is an active-site residue. Residue Gly-538 participates in NAD(+) binding.

Belongs to the urocanase family. NAD(+) serves as cofactor.

Its subcellular location is the cytoplasm. The enzyme catalyses 4-imidazolone-5-propanoate = trans-urocanate + H2O. The protein operates within amino-acid degradation; L-histidine degradation into L-glutamate; N-formimidoyl-L-glutamate from L-histidine: step 2/3. Its function is as follows. Catalyzes the conversion of urocanate to 4-imidazolone-5-propionate. The chain is Urocanate hydratase from Ralstonia nicotianae (strain ATCC BAA-1114 / GMI1000) (Ralstonia solanacearum).